A 256-amino-acid polypeptide reads, in one-letter code: 5'-nucleotidase SurE (256 aa).

A divalent metal cation-binding residues include Asp-8, Asp-9, Ser-39, and Asn-95.

This sequence belongs to the SurE nucleotidase family. The cofactor is a divalent metal cation.

The protein localises to the cytoplasm. It carries out the reaction a ribonucleoside 5'-phosphate + H2O = a ribonucleoside + phosphate. Nucleotidase that shows phosphatase activity on nucleoside 5'-monophosphates. The protein is 5'-nucleotidase SurE of Methanosphaera stadtmanae (strain ATCC 43021 / DSM 3091 / JCM 11832 / MCB-3).